Here is a 399-residue protein sequence, read N- to C-terminus: MPDPGWAARTPEANDLLLKAGTGVGTHLANQTAWTTLGASHHASGVASAINTAATAASWLGVGSAASALNVTMLNATLHGLAGWVDVKPAVVSTAIAAFETANAAMRPAPECMVNRDEWGVDNAINPSVLWTLTPRIVSLDVEYFGVMWPNNAAVGATYGGVLAALAESLAIPPPVATMGASPAAPAQAAAAVGQAAAEAAAGCGMRSAYQGVQAGSTGAGQSTSAGENFGNQLSTFMQPMQAVMQAAPQALQAPSGLMQAPMSAMQPLQSMVGMFANPGALGMGGAAPGASAASAAGGISAAATEVGAGGGGAALGGGGMPATSFTRPVSAFESGTSGRPVGLRPSGALGADVVRAPTTTVGGTPIGGMPVGHAAGGHRGSHGKSEQAATVRVVDDRR.

Residues 375–399 (AAGGHRGSHGKSEQAATVRVVDDRR) are disordered.

The protein belongs to the mycobacterial PPE family.

This is an uncharacterized protein from Mycobacterium tuberculosis (strain CDC 1551 / Oshkosh).